An 885-amino-acid chain; its full sequence is DNA mismatch repair protein MutS (885 aa).

626 to 633 (GPNMGGKS) contributes to the ATP binding site.

It belongs to the DNA mismatch repair MutS family.

This protein is involved in the repair of mismatches in DNA. It is possible that it carries out the mismatch recognition step. This protein has a weak ATPase activity. In Burkholderia ambifaria (strain MC40-6), this protein is DNA mismatch repair protein MutS.